A 645-amino-acid polypeptide reads, in one-letter code: Acetyl-coenzyme A synthetase (645 aa).

CoA is bound by residues 190-193 and Thr308; that span reads RGGR. Residues 384-386, 408-413, Asp497, and Arg512 contribute to the ATP site; these read GEP and DTWWQT. Ser520 is a binding site for CoA. ATP is bound at residue Arg523. The Mg(2+) site is built by Val534, His536, and Val539. At Lys606 the chain carries N6-acetyllysine.

It belongs to the ATP-dependent AMP-binding enzyme family. Mg(2+) is required as a cofactor. Acetylated. Deacetylation by the SIR2-homolog deacetylase activates the enzyme.

The catalysed reaction is acetate + ATP + CoA = acetyl-CoA + AMP + diphosphate. Its function is as follows. Catalyzes the conversion of acetate into acetyl-CoA (AcCoA), an essential intermediate at the junction of anabolic and catabolic pathways. AcsA undergoes a two-step reaction. In the first half reaction, AcsA combines acetate with ATP to form acetyl-adenylate (AcAMP) intermediate. In the second half reaction, it can then transfer the acetyl group from AcAMP to the sulfhydryl group of CoA, forming the product AcCoA. The protein is Acetyl-coenzyme A synthetase of Alkalilimnicola ehrlichii (strain ATCC BAA-1101 / DSM 17681 / MLHE-1).